Here is a 596-residue protein sequence, read N- to C-terminus: Capsid protein VP1 (596 aa).

The protein belongs to the microviridae F protein family.

The protein localises to the virion. It is found in the host cytoplasm. In terms of biological role, assembles to form an icosahedral capsid with a T=1 symmetry. This Chlamydia phage 1 (Bacteriophage Chp1) protein is Capsid protein VP1.